We begin with the raw amino-acid sequence, 173 residues long: Photosystem I assembly protein Ycf3 (173 aa).

TPR repeat units follow at residues 35 to 68 (AYVYYRDGLSAQNDGDYAEALENYEESLKLEENP), 72 to 105 (GETLKNMAIIYMSNGEEDRALATYQKALDENPKQ), and 120 to 153 (GRTAEEEGRRDDADGWFDQAAEVWTQAVRLNPGG).

The protein belongs to the Ycf3 family.

It localises to the cellular thylakoid membrane. Functionally, essential for the assembly of the photosystem I (PSI) complex. May act as a chaperone-like factor to guide the assembly of the PSI subunits. The chain is Photosystem I assembly protein Ycf3 from Synechococcus sp. (strain WH7803).